A 441-amino-acid polypeptide reads, in one-letter code: MNIEVNFCHNMEHFGAFEENPKLAIAVSGGTDSLALMLLVKHWNEKVKGEITVLTIDHHLRSESTSEADYVSSICQNIKLQHVTLHWIHKGITGNIQAQARKARYHLLTNYCQEHDILHLITGHHADDIVENFFIRLLRGAGLAGLSSHNIFFVNNVRIIRPLFNITKQDLKKYLEQQNIKWINDPSNNSNKYLRTQVRDLLKSMLISFQNNFTVELLKKRIMLSQMHLTRALDSVNNEIIHYVVYAVKIYSAGFAVIDRKLFRQASPEARYAILSYLLMIVGANTKPQRFSSLQHIILHDIQEYNTYKTLHGCIVEYSIQYIIIYREFGRCYPRSKVVSNSVVWDYRFKVVDNRKNNRMNLTIDYLKKSDYHLIKSYVESNQRNAYFNYSRKILFTFPVIKHLEKVIAIPHIKYYSDKTIQESVSFVFEPKLISRWFHYC.

28–33 is an ATP binding site; that stretch reads SGGTDS.

It belongs to the tRNA(Ile)-lysidine synthase family.

Its subcellular location is the cytoplasm. It carries out the reaction cytidine(34) in tRNA(Ile2) + L-lysine + ATP = lysidine(34) in tRNA(Ile2) + AMP + diphosphate + H(+). Functionally, ligates lysine onto the cytidine present at position 34 of the AUA codon-specific tRNA(Ile) that contains the anticodon CAU, in an ATP-dependent manner. Cytidine is converted to lysidine, thus changing the amino acid specificity of the tRNA from methionine to isoleucine. This chain is tRNA(Ile)-lysidine synthase, found in Orientia tsutsugamushi (strain Boryong) (Rickettsia tsutsugamushi).